Consider the following 368-residue polypeptide: SH3 domain-containing protein 2 (368 aa).

Coiled-coil stretches lie at residues 1–21 and 146–210; these read MDAI…QQQA and LEDA…LGKE. The region spanning 1–264 is the BAR domain; that stretch reads MDAIRKQASR…MVSERQRIEA (264 aa). Residues 258 to 281 form a disordered region; it reads ERQRIEAPSTPSSADSMPPPPSYE. Residues 299–358 enclose the SH3 domain; it reads MGYFLGEVLFPYHGVTDVELSLSTGEYVVVRKVTGSGWAEGECKGKAGWFPYGYIERRER.

In terms of assembly, homodimer. Interacts with FREE1. Interacts (via SH3 domain) with ATG8E and ATG8F. Component of a phosphoinositide 3-kinase (PI3K) complex containing ATG6, SH3P2 and FREE1. Binds to SH3P3 and DRP1A. Forms a complex made of SH3P2 and DRP1A and triggers its accumulation at the cell plate. Highly expressed in seedlings. Detected in flowers, leaves and stems.

It localises to the cytoplasm. The protein resides in the cytoplasmic vesicle. Its subcellular location is the clathrin-coated vesicle. The protein localises to the cell membrane. It is found in the late endosome. It localises to the autophagosome membrane. In terms of biological role, regulator for autophaosome formation and/or maturation. Binds phosphatidylinositol-phosphate; highest affinity for vesicles containing PtdIns(3,4,5)P(3), followed by those containing PtdIns(4,5)P(2) and PtdIns(3,4)P(2), with minimal binding to phosphatidylinositol monophosphates, including PtdIns(3)P. Together with DRP1A, converts the fused vesicles to tubular structures at the cell plate during cytokinesis. In Arabidopsis thaliana (Mouse-ear cress), this protein is SH3 domain-containing protein 2.